Here is a 410-residue protein sequence, read N- to C-terminus: MNQNHTLDNERNDDDEHSNNHVDTNDMKNFISCIKSKSNINDDKEDQQRPVRYLSRTVINSMTRGQLLELVKSMYSDRSDIYHMNSIQLLTLINKTIGHNGNYVQVVTKDYINDLNVTQLRIFCKELQLDTTHDVDRMNKPMLEILLKSYFKNNYPTSTNDDNDNENRSDDDDDDDDYRNDREEVEDSDINKNVNISSYNNEDIEEVDERTKSLKIDRRLLKMHQDNAKLVDKIDMLKNTIEDLQNRLLTAETTRDDILRRYSILENRENIRDDDDNRNSTTISNLQNLLNNANIAMTRSRINVADLTASLNERTKQLEDCLTRGREKDASIDKLNLKVTELEKLLQIQRDTHQDATLKISNIRMNDNNATRIQISSLNDELHRCQDQIKSTSITVYNRIYSDLYERLWS.

Disordered regions lie at residues 1 to 24 (MNQNHTLDNERNDDDEHSNNHVDT) and 156 to 197 (PTST…VNIS). A compositionally biased stretch (acidic residues) spans 161-188 (DDNDNENRSDDDDDDDDYRNDREEVEDS).

Its subcellular location is the virion. This Trichoplusia ni ascovirus 2c (TnAV-2c) protein is Structural protein ORF142.